A 122-amino-acid polypeptide reads, in one-letter code: Spermidine export protein MdtJ (122 aa).

The next 4 membrane-spanning stretches (helical) occupy residues 1–21, 31–51, 54–74, and 81–101; these read MIYW…TLSM, TGHI…SMAV, VALG…ITLF, and EPIS…IMLV.

Belongs to the drug/metabolite transporter (DMT) superfamily. Small multidrug resistance (SMR) (TC 2.A.7.1) family. MdtJ subfamily. In terms of assembly, forms a complex with MdtI.

It is found in the cell inner membrane. In terms of biological role, catalyzes the excretion of spermidine. The sequence is that of Spermidine export protein MdtJ from Serratia proteamaculans (strain 568).